Here is a 201-residue protein sequence, read N- to C-terminus: Interferon-induced transmembrane protein 10 (201 aa).

2 disordered regions span residues 1–23 (MAQG…DGTQ) and 60–88 (AAPA…KTDS). Residues 1 to 127 (MAQGPSQCPA…PDTTEVNDYY (127 aa)) lie on the Extracellular side of the membrane. Pro residues predominate over residues 63–73 (APEPSASPPMA). A helical membrane pass occupies residues 128-148 (LWSIFNFVYLNFCCLGFIALA). S-palmitoyl cysteine attachment occurs at residues C140 and C141. Residues 149–173 (YSLKVRDKKLLNDLNGAVEDAKTAR) are Cytoplasmic-facing. The helical transmembrane segment at 174-194 (LFNITSSALAASCIILIFIFL) threads the bilayer. At 195 to 201 (RYPLTDY) the chain is on the extracellular side.

It belongs to the CD225/Dispanin family.

The protein localises to the cell membrane. The chain is Interferon-induced transmembrane protein 10 (Ifitm10) from Mus musculus (Mouse).